Consider the following 272-residue polypeptide: NAD kinase (272 aa).

Asp50 serves as the catalytic Proton acceptor. NAD(+)-binding positions include 50-51 (DG), 126-127 (NE), Arg152, Asp154, 165-170 (TAYNKS), and Ala189.

The protein belongs to the NAD kinase family. A divalent metal cation serves as cofactor.

It localises to the cytoplasm. It carries out the reaction NAD(+) + ATP = ADP + NADP(+) + H(+). In terms of biological role, involved in the regulation of the intracellular balance of NAD and NADP, and is a key enzyme in the biosynthesis of NADP. Catalyzes specifically the phosphorylation on 2'-hydroxyl of the adenosine moiety of NAD to yield NADP. In Streptococcus pneumoniae serotype 19F (strain G54), this protein is NAD kinase.